Consider the following 310-residue polypeptide: Ribose-phosphate pyrophosphokinase (310 aa).

Residues 33 to 35 (DGE) and 92 to 93 (RQ) each bind ATP. 2 residues coordinate Mg(2+): H127 and D166. The active site involves K189. D-ribose 5-phosphate-binding positions include R191, D215, and 219–223 (DTAGT).

The protein belongs to the ribose-phosphate pyrophosphokinase family. Class I subfamily. In terms of assembly, homohexamer. Requires Mg(2+) as cofactor.

It localises to the cytoplasm. It catalyses the reaction D-ribose 5-phosphate + ATP = 5-phospho-alpha-D-ribose 1-diphosphate + AMP + H(+). It functions in the pathway metabolic intermediate biosynthesis; 5-phospho-alpha-D-ribose 1-diphosphate biosynthesis; 5-phospho-alpha-D-ribose 1-diphosphate from D-ribose 5-phosphate (route I): step 1/1. Functionally, involved in the biosynthesis of the central metabolite phospho-alpha-D-ribosyl-1-pyrophosphate (PRPP) via the transfer of pyrophosphoryl group from ATP to 1-hydroxyl of ribose-5-phosphate (Rib-5-P). The protein is Ribose-phosphate pyrophosphokinase of Bordetella parapertussis (strain 12822 / ATCC BAA-587 / NCTC 13253).